Reading from the N-terminus, the 269-residue chain is Extracellular metalloprotease UREG_07765 (269 aa).

The N-terminal stretch at 1-18 (MRLSVSLLALAFGSLVAA) is a signal peptide. Residue Asn179 is glycosylated (N-linked (GlcNAc...) asparagine). Position 191 (His191) interacts with Zn(2+). Glu192 is an active-site residue. His195 serves as a coordination point for Zn(2+). Residues 207–227 (VSDTPPQRSSTQGCPSSRDSC) are disordered. The segment covering 210-225 (TPPQRSSTQGCPSSRD) has biased composition (polar residues). An intrachain disulfide couples Cys220 to Cys246.

Belongs to the peptidase M43B family.

The protein localises to the secreted. Functionally, secreted metalloproteinase that allows assimilation of proteinaceous substrates. The chain is Extracellular metalloprotease UREG_07765 from Uncinocarpus reesii (strain UAMH 1704).